Reading from the N-terminus, the 315-residue chain is Serpentine receptor class delta-31 (315 aa).

The next 7 helical transmembrane spans lie at 6–26 (LHSILSLTAVLLNAFTMYLAI), 38–58 (AIITIKTATDILTSIMSFFVM), 83–103 (ACYVGHMLMLCFLEYNLIWMI), 124–144 (VFVAFCLSIPSIIHMVVWFSI), 174–194 (ITLITQLFITAFLVIVAYIWI), 225–245 (FQVFLPSFIFLGVITFASMFT), and 256–276 (AISVIFMFSPIISPFSYILFV).

This sequence belongs to the nematode receptor-like protein srd family.

It is found in the membrane. This chain is Serpentine receptor class delta-31 (srd-31), found in Caenorhabditis elegans.